The primary structure comprises 245 residues: Derlin-1 (245 aa).

The Cytoplasmic segment spans residues 1–5 (MDLEN). A helical transmembrane segment spans residues 6-26 (FLLGIPIVTRYWFLASTIIPL). Residues 27–57 (LGRFGFINVQWMFLQWDLVVNKFQFWRPLTA) are Lumenal-facing. The helical transmembrane segment at 58-78 (LIYYPVTPQTGFHWLMMCYFL) threads the bilayer. At 79–100 (YNYSKALESETYRGRSADYLFM) the chain is on the cytoplasmic side. The chain crosses the membrane as a helical span at residues 101 to 121 (LIFNWFFCSGLCMALDIYFLL). The Lumenal portion of the chain corresponds to 122 to 166 (EPMVISVLYVWCQVNKDTIVSFWFGMRFPARYLPWVLWGFNAVLR). The chain crosses the membrane as a helical span at residues 167–187 (GGGTNELVGILVGHAYFFVAL). At 188-245 (KYPDEYGVDLISTPEFLHRLIPDEDGGIHGQDGNIRGARQQPRGHQWPGGVGARLGGN) the chain is on the cytoplasmic side. Residues 218-245 (QDGNIRGARQQPRGHQWPGGVGARLGGN) form a disordered region. The span at 234-245 (WPGGVGARLGGN) shows a compositional bias: gly residues.

It belongs to the derlin family.

It localises to the endoplasmic reticulum membrane. Functionally, specifically required for the degradation process of misfolded endoplasmic reticulum (ER) luminal proteins. Participates in the transfer of misfolded proteins from the ER to the cytosol, where they are destroyed by the proteasome in a ubiquitin-dependent manner. The polypeptide is Derlin-1 (Caenorhabditis elegans).